We begin with the raw amino-acid sequence, 188 residues long: ATP synthase subunit b (188 aa).

Residues 19–39 (LPAVYDIVWSAVVFVVLLVVI) traverse the membrane as a helical segment.

It belongs to the ATPase B chain family. In terms of assembly, F-type ATPases have 2 components, F(1) - the catalytic core - and F(0) - the membrane proton channel. F(1) has five subunits: alpha(3), beta(3), gamma(1), delta(1), epsilon(1). F(0) has three main subunits: a(1), b(2) and c(10-14). The alpha and beta chains form an alternating ring which encloses part of the gamma chain. F(1) is attached to F(0) by a central stalk formed by the gamma and epsilon chains, while a peripheral stalk is formed by the delta and b chains.

Its subcellular location is the cell membrane. F(1)F(0) ATP synthase produces ATP from ADP in the presence of a proton or sodium gradient. F-type ATPases consist of two structural domains, F(1) containing the extramembraneous catalytic core and F(0) containing the membrane proton channel, linked together by a central stalk and a peripheral stalk. During catalysis, ATP synthesis in the catalytic domain of F(1) is coupled via a rotary mechanism of the central stalk subunits to proton translocation. Its function is as follows. Component of the F(0) channel, it forms part of the peripheral stalk, linking F(1) to F(0). The polypeptide is ATP synthase subunit b (Clavibacter michiganensis subsp. michiganensis (strain NCPPB 382)).